A 428-amino-acid polypeptide reads, in one-letter code: C4-dicarboxylate transport protein (428 aa).

9 helical membrane-spanning segments follow: residues 8–28, 44–64, 76–96, 142–162, 184–204, 222–242, 289–309, 326–346, and 352–372; these read SLYVQVLTAIAIGILLGHFYP, LIKMVIAPVIFCTVVTGIAGM, VALLYFEVVSTIALIIGLIIV, IGAFASGNILQVLLFAVLFGF, VIFGIINMIMRLAPIGAFGAM, LIICFYITCILFVVVVLGSIA, VVGLVIPTGYSFNLDGTSIYL, IFHQITLLVVLLLSSKGAAGV, and IVLAATISAVGHLPVAGLALI.

It belongs to the dicarboxylate/amino acid:cation symporter (DAACS) (TC 2.A.23) family.

Its subcellular location is the cell inner membrane. In terms of biological role, responsible for the transport of dicarboxylates such as succinate, fumarate, and malate from the periplasm across the membrane. The polypeptide is C4-dicarboxylate transport protein (Klebsiella pneumoniae (strain 342)).